Reading from the N-terminus, the 265-residue chain is NAD kinase (265 aa).

The Proton acceptor role is filled by Asp45. NAD(+) is bound by residues 45 to 46, 122 to 123, Arg148, Asp150, 161 to 166, Ala185, and Gln223; these read DG, NE, and TAYNKS.

It belongs to the NAD kinase family. A divalent metal cation serves as cofactor.

It localises to the cytoplasm. The catalysed reaction is NAD(+) + ATP = ADP + NADP(+) + H(+). Functionally, involved in the regulation of the intracellular balance of NAD and NADP, and is a key enzyme in the biosynthesis of NADP. Catalyzes specifically the phosphorylation on 2'-hydroxyl of the adenosine moiety of NAD to yield NADP. The protein is NAD kinase of Enterococcus faecalis (strain ATCC 700802 / V583).